A 494-amino-acid polypeptide reads, in one-letter code: Casein kinase I homolog HRR25 (494 aa).

The region spanning F9 to I278 is the Protein kinase domain. ATP is bound by residues I15–I23 and K38. D128 (proton acceptor) is an active-site residue. S143 carries the phosphoserine modification. A disordered region spans residues R394–L494. 2 stretches are compositionally biased toward low complexity: residues Q395–P418 and Q432–Q444. The span at V445–P479 shows a compositional bias: polar residues.

Belongs to the protein kinase superfamily. CK1 Ser/Thr protein kinase family. Casein kinase I subfamily. As to quaternary structure, interacts with HRI1. Interacts with ELP1/IKI3; the interaction leads to ELP1/IKI3 phosphorylation.

The protein localises to the cytoplasm. The protein resides in the nucleus. It localises to the nucleolus. It is found in the nucleoplasm. The catalysed reaction is L-seryl-[protein] + ATP = O-phospho-L-seryl-[protein] + ADP + H(+). It carries out the reaction L-threonyl-[protein] + ATP = O-phospho-L-threonyl-[protein] + ADP + H(+). Protein kinase which phosphorylates serine and threonine residues. Can use casein as a substrate. Phosphorylates elongator complex member ELP1/IKI3 on 'Ser-1198' and 'Ser-1202' which promotes the tRNA modification function of the complex. Associated with repair of damaged DNA and meiosis. This is Casein kinase I homolog HRR25 (HRR25) from Saccharomyces cerevisiae (strain ATCC 204508 / S288c) (Baker's yeast).